The following is a 1412-amino-acid chain: Protein MODIFIER OF SNC1 1 (1412 aa).

Disordered stretches follow at residues 1-276, 384-437, 472-798, 827-888, 909-1144, and 1156-1412; these read MTSS…QSYP, GYGS…TQRP, QQMQ…KQKQ, NEGV…DESI, DIKV…WNDG, and AEEM…GDRN. Polar residues predominate over residues 56–103; the sequence is SWGSKSSLNAWGTSSLSPRTESGPGSPSHLSNRPSSGGSVTRPSTADS. Ser72 carries the post-translational modification Phosphoserine. Over residues 109-119 the composition is skewed to low complexity; the sequence is SSSSVAWDSNS. Residues 120-135 show a composition bias toward polar residues; that stretch reads RPSSASGVFPSNQPSV. 2 stretches are compositionally biased toward basic and acidic residues: residues 197–207 and 236–267; these read AEKDTSEKSTR and ANDR…EGQL. Basic and acidic residues predominate over residues 478–488; that stretch reads RNERREIRNDA. Composition is skewed to polar residues over residues 517 to 531, 539 to 553, 565 to 581, and 610 to 639; these read KTRT…SSVV, QPRT…NKVS, SKNS…TNKN, and RIVN…TNTE. Over residues 665-713 the composition is skewed to basic and acidic residues; that stretch reads DPKDNQRSTMRELARQRAQQRQKEEEERARDQRAKALAKLEELNRRSQI. The stretch at 667-717 forms a coiled coil; sequence KDNQRSTMRELARQRAQQRQKEEEERARDQRAKALAKLEELNRRSQIYEEG. 3 stretches are compositionally biased toward polar residues: residues 738-749, 756-779, and 829-847; these read GSHSSNATNSVE, KNTT…QQDN, and GVSS…SAES. Over residues 850-862 the composition is skewed to basic residues; sequence PKRKNNRNGKKKH. A compositionally biased stretch (basic and acidic residues) spans 877–888; that stretch reads VGKETKSGDESI. Ser883 carries the phosphoserine modification. 2 stretches are compositionally biased toward polar residues: residues 914–938 and 983–1003; these read GDSS…NWKS and QTTV…QTSS. Basic and acidic residues predominate over residues 1006-1023; the sequence is KRVEIERYVPKPIVKEMA. Residues 1056–1070 are compositionally biased toward polar residues; it reads LQPSGSTAGKSGSPS. Basic residues predominate over residues 1071–1084; the sequence is KSRHGNGRQGKHGR. A compositionally biased stretch (polar residues) spans 1106 to 1137; that stretch reads FVTSNQPIRGTVNYHSSKQTEQIAAKDQTTCN. Basic and acidic residues-rich tracts occupy residues 1191-1202, 1222-1232, and 1242-1251; these read DPKKGNKRDFNK, KEGRVPGDHVW, and GGRESTRDKP. 2 stretches are compositionally biased toward polar residues: residues 1266–1286 and 1293–1307; these read GFTT…QNRS and VEQN…NTGQ. Basic and acidic residues-rich tracts occupy residues 1338-1351 and 1359-1369; these read SNRD…HYEY and YDGERSREQSK. Low complexity predominate over residues 1384–1397; sequence QGQQRQGGYQQQRG. Positions 1400-1412 are enriched in gly residues; that stretch reads GRNGGHGFTGDRN.

In terms of assembly, interacts with TCP14 and TCP15.

Involved in the regulation of the chromatin structure and DNA methylation at the SNC1 locus. Regulates the expression of SNC1 at chromatin level. The protein is Protein MODIFIER OF SNC1 1 (MOS1) of Arabidopsis thaliana (Mouse-ear cress).